The following is a 504-amino-acid chain: Pentatricopeptide repeat-containing protein At1g05600 (504 aa).

PPR repeat units lie at residues 45 to 79 (NGSVYATMIDILGKSNRVLEMKYVIERMKEDSCEC), 80 to 114 (KDSVFASVIRTFSRAGRLEDAISLFKSLHEFNCVN), 115 to 145 (WSLSFDTLLQEMVKESELEAACHIFRKYCYG), 151 to 185 (RITALNLLMKVLCQVNRSDLASQVFQEMNYQGCYP), 186 to 216 (DRDSYRILMKGFCLEGKLEEATHLLYSMFWR), 225 to 259 (DIVVYRILLDALCDAGEVDDAIEILGKILRKGLKA), 260 to 296 (PKRCYHHIEAGHWESSSEGIERVKRLLTETLIRGAIP), 297 to 331 (CLDSYSAMATDLFEEGKLVEGEEVLLAMRSKGFEP), 332 to 367 (TPFIYGAKVKALCRAGKLKEAVSVINKEMMQGHCLP), 368 to 398 (TVGVYNVLIKGLCDDGKSMEAVGYLKKMSKQ), 404 to 438 (NEETYQTLVDGLCRDGQFLEASQVMEEMLIKSHFP), and 439 to 473 (GVETYHMMIKGLCDMDRRYEAVMWLEEMVSQDMVP).

The protein belongs to the PPR family. P subfamily.

The polypeptide is Pentatricopeptide repeat-containing protein At1g05600 (Arabidopsis thaliana (Mouse-ear cress)).